We begin with the raw amino-acid sequence, 94 residues long: Large ribosomal subunit protein uL23 (94 aa).

It belongs to the universal ribosomal protein uL23 family. In terms of assembly, part of the 50S ribosomal subunit. Contacts protein L29, and trigger factor when it is bound to the ribosome.

Functionally, one of the early assembly proteins it binds 23S rRNA. One of the proteins that surrounds the polypeptide exit tunnel on the outside of the ribosome. Forms the main docking site for trigger factor binding to the ribosome. The protein is Large ribosomal subunit protein uL23 of Akkermansia muciniphila (strain ATCC BAA-835 / DSM 22959 / JCM 33894 / BCRC 81048 / CCUG 64013 / CIP 107961 / Muc).